Here is a 429-residue protein sequence, read N- to C-terminus: Enolase (429 aa).

Q163 provides a ligand contact to (2R)-2-phosphoglycerate. Residue E205 is the Proton donor of the active site. The Mg(2+) site is built by D242, E286, and D313. (2R)-2-phosphoglycerate contacts are provided by K338, R367, S368, and K389. Catalysis depends on K338, which acts as the Proton acceptor.

This sequence belongs to the enolase family. Mg(2+) is required as a cofactor.

It is found in the cytoplasm. The protein resides in the secreted. It localises to the cell surface. It carries out the reaction (2R)-2-phosphoglycerate = phosphoenolpyruvate + H2O. The protein operates within carbohydrate degradation; glycolysis; pyruvate from D-glyceraldehyde 3-phosphate: step 4/5. In terms of biological role, catalyzes the reversible conversion of 2-phosphoglycerate (2-PG) into phosphoenolpyruvate (PEP). It is essential for the degradation of carbohydrates via glycolysis. The polypeptide is Enolase (Pelobacter propionicus (strain DSM 2379 / NBRC 103807 / OttBd1)).